Consider the following 240-residue polypeptide: Transmembrane protein 65 (240 aa).

A mitochondrion-targeting transit peptide spans 1 to 61 (MSRLLPLLRS…RRLGTHPKKE (61 aa)). Over 62-110 (PMEALNTAQGARDFIYSLHSTERSCLLKELHRFESIAIAQEKLEAPPPT) the chain is Cytoplasmic. The helical transmembrane segment at 111–131 (PGQLRYVFIHNAIPFIGFGFL) threads the bilayer. At 132–142 (DNAIMIVAGTH) the chain is on the extracellular side. A helical membrane pass occupies residues 143–165 (IEMSIGIILGISTMAAAALGNLV). The Cytoplasmic segment spans residues 166 to 209 (SDLAGLGLAGYVEALASRLGLSIPDLTPKQVDMWQTRLSTHLGK). The chain crosses the membrane as a helical span at residues 210–230 (AVGVTIGCILGMFPLIFFGGG). Topologically, residues 231-240 (EEDEKLETKS) are extracellular.

In terms of assembly, monomer. Homodimer. Interacts with GJA1. Interacts weakly with DSP. Interacts with SCN1B. Predominantly expressed the ventricular tissue (at protein level).

The protein localises to the cell membrane. It is found in the mitochondrion inner membrane. Its function is as follows. Essential for maintaining proper cardiac intercalated disk (ICD) structure and function as well as cardiac conduction velocity in the heart. Its association with SCN1B is required for stabilizing the perinexus in the ICD and for localization of GJA1 and SCN5A to the ICD. May regulate the function of the gap junction protein GJA1 and may contribute to the stability and proper localization of GJA1 to cardiac intercalated disk thereby regulating gap junction communication. May also play a role in the regulation of mitochondrial respiration and mitochondrial DNA copy number maintenance. The protein is Transmembrane protein 65 (TMEM65) of Homo sapiens (Human).